A 666-amino-acid chain; its full sequence is Pentatricopeptide repeat-containing protein At1g64100 (666 aa).

15 PPR repeats span residues 105–139 (TAVDCNKVIGVFVRMNRPDVAISLYRKMEIRRIPL), 140–174 (NIYSFNILIKCFCDCHKLSFSLSTFGKLTKLGFQP), 175–209 (DVVTFNTLLHGLCLEDRISEALALFGYMVETGFLE), 225–259 (VVITFNTLINGLCLEGRVLEAAALVNKMVGKGLHI), 260–294 (DVVTYGTIVNGMCKMGDTKSALNLLSKMEETHIKP), 295–329 (DVVIYSAIIDRLCKDGHHSDAQYLFSEMLEKGIAP), 330–364 (NVFTYNCMIDGFCSFGRWSDAQRLLRDMIEREINP), 365–399 (DVLTFNALISASVKEGKLFEAEKLCDEMLHRCIFP), 400–430 (DTVTYNSMIYGFCKHNRFDDAKHMFDLMASP), 431–465 (DVVTFNTIIDVYCRAKRVDEGMQLLREISRRGLVA), 466–500 (NTTTYNTLIHGFCEVDNLNAAQDLFQEMISHGVCP), 501–535 (DTITCNILLYGFCENEKLEEALELFEVIQMSKIDL), 536–570 (DTVAYNIIIHGMCKGSKVDEAWDLFCSLPIHGVEP), 571–605 (DVQTYNVMISGFCGKSAISDANVLFHKMKDNGHEP), and 606–640 (DNSTYNTLIRGCLKAGEIDKSIELISEMRSNGFSG).

The protein belongs to the PPR family. P subfamily.

In Arabidopsis thaliana (Mouse-ear cress), this protein is Pentatricopeptide repeat-containing protein At1g64100.